The primary structure comprises 485 residues: N-succinylglutamate 5-semialdehyde dehydrogenase (485 aa).

220–225 (GSANTG) serves as a coordination point for NAD(+). Catalysis depends on residues glutamate 243 and cysteine 278.

The protein belongs to the aldehyde dehydrogenase family. AstD subfamily.

The catalysed reaction is N-succinyl-L-glutamate 5-semialdehyde + NAD(+) + H2O = N-succinyl-L-glutamate + NADH + 2 H(+). Its pathway is amino-acid degradation; L-arginine degradation via AST pathway; L-glutamate and succinate from L-arginine: step 4/5. Catalyzes the NAD-dependent reduction of succinylglutamate semialdehyde into succinylglutamate. This is N-succinylglutamate 5-semialdehyde dehydrogenase from Vibrio campbellii (strain ATCC BAA-1116).